A 399-amino-acid chain; its full sequence is Ankyrin repeat domain-containing protein 65 (399 aa).

ANK repeat units follow at residues 40 to 69, 73 to 102, 106 to 135, 139 to 168, 176 to 205, 207 to 231, 235 to 264, 268 to 297, 301 to 330, and 334 to 363; these read QGWGHLLQAVWRGPAGLVTQLLRQGASVEE, AGRTPLHLAVLRGHAPLVRLLLQRGAPVGA, AGRTALHEAAWHGHSRVAELLLQRGASAAA, TGLTPLHWAAALGHTLLAARLLEAPGPGPA, RGWTAAHWAAAGGRLAVLELLAAGGAGLDG, LLVAAAAGRGAALRFLLARGARVDA, AGATALGLAAALGRSQDIEVLLGHGADPGI, HGRSALHRAAARGHLLAVQLLVTQGAEVDA, LGLTPLHHASREGHVEVAGCLLDRGAQVDA, and LRKTPLHLAAERGHGPTVGLLLSRGASPTL. Residues 377–399 are disordered; sequence DLPQALPELGGGEKECEGIESTG.

The chain is Ankyrin repeat domain-containing protein 65 (ANKRD65) from Homo sapiens (Human).